Here is a 326-residue protein sequence, read N- to C-terminus: Putative ankyrin repeat protein L25 (326 aa).

ANK repeat units follow at residues 11 to 40, 42 to 65, 66 to 95, 96 to 125, 127 to 154, 155 to 184, 185 to 214, 216 to 244, 246 to 274, and 275 to 304; these read RSEY…DLNV, KLFY…NIHV, DDEF…DIHV, NDDA…DIHA, NELV…DIHA, EDDE…NFRA, ENDY…DIHA, DEYA…DIHA, NDYG…NIHA, and KDDY…NIHA.

This is Putative ankyrin repeat protein L25 from Acanthamoeba polyphaga mimivirus (APMV).